A 1058-amino-acid chain; its full sequence is COP1-interacting protein 7 (1058 aa).

Disordered regions lie at residues 123-147, 262-281, and 330-463; these read LGGT…GDTV, HGNS…QEGR, and MGDV…GNDN. Polar residues-rich tracts occupy residues 126–136 and 262–276; these read TWTSQKSTALS and HGNS…SFET. Residues 340–347 carry the Nuclear localization signal 1 motif; the sequence is SKKKKKKK. Basic residues predominate over residues 340–353; that stretch reads SKKKKKKKKNKKKS. A compositionally biased stretch (acidic residues) spans 403-414; that stretch reads DSDESGEEEGFV. The short motif at 431–438 is the Nuclear localization signal 2 element; sequence ERRHKSTS. Positions 432 to 446 are enriched in basic residues; it reads RRHKSTSHRQRKHKS. The segment covering 447 to 462 has biased composition (basic and acidic residues); that stretch reads HNGDDDSSNKETKGND. Ser477 is subject to Phosphoserine. The interval 708-887 is disordered; the sequence is AGEQTLDGKE…KSVELSRDPS (180 aa). Basic and acidic residues predominate over residues 757 to 773; the sequence is SKSEMEEERKKRMEELL. Positions 764 to 771 match the Nuclear localization signal 3 motif; it reads ERKKRMEE. Residues 783-808 are compositionally biased toward low complexity; it reads KSSGGSVSSSLASKKTPTVTKSVKSS. Basic and acidic residues-rich tracts occupy residues 860–869 and 878–887; these read KTEKAQEKKS and KSVELSRDPS. A phosphoserine mark is found at Ser915, Ser986, and Ser992. The segment at 1020–1041 is disordered; it reads STPPATEADHSRKKWNSEETSP. The span at 1026-1040 shows a compositional bias: basic and acidic residues; the sequence is EADHSRKKWNSEETS.

In terms of assembly, interacts with COP1.

It localises to the nucleus. In terms of biological role, exhibits transcriptional activation activity. Positive regulator of light-regulated genes, probably being a direct downstream target of COP1 for mediating light control of gene expression. The chain is COP1-interacting protein 7 from Arabidopsis thaliana (Mouse-ear cress).